Here is a 160-residue protein sequence, read N- to C-terminus: Transmembrane protein 220 (160 aa).

5 helical membrane passes run 3-23, 30-50, 62-82, 100-120, and 125-145; these read PALW…AALV, AEVW…VGLN, ISAI…SYLL, GLVI…NPVG, and LAIA…IYIN.

The protein resides in the membrane. The polypeptide is Transmembrane protein 220 (TMEM220) (Homo sapiens (Human)).